The following is a 105-amino-acid chain: Large ribosomal subunit protein uL24 (105 aa).

It belongs to the universal ribosomal protein uL24 family. In terms of assembly, part of the 50S ribosomal subunit.

Functionally, one of two assembly initiator proteins, it binds directly to the 5'-end of the 23S rRNA, where it nucleates assembly of the 50S subunit. Its function is as follows. One of the proteins that surrounds the polypeptide exit tunnel on the outside of the subunit. The chain is Large ribosomal subunit protein uL24 from Vibrio vulnificus (strain YJ016).